A 130-amino-acid polypeptide reads, in one-letter code: Serum amyloid A-4 protein (130 aa).

Residues 1 to 18 (MRLFTGIVFCSLVMGVTS) form the signal peptide. N94 carries N-linked (GlcNAc...) asparagine; partial glycosylation. The disordered stretch occupies residues 101–130 (DSKSNEKAEEWGRSGKDPDRFRPDGLPKKY).

It belongs to the SAA family. As to quaternary structure, apolipoprotein of the HDL complex. In terms of tissue distribution, expressed by the liver; secreted in plasma.

It localises to the secreted. Major acute phase reactant. This chain is Serum amyloid A-4 protein, found in Homo sapiens (Human).